The sequence spans 397 residues: F-box protein At3g49450 (397 aa).

Residues 26–75 (GENSGTLPTDLMVEILSRVPAKSAARFRCVSNDWNSLLRSPYLTNLFLKR) form the F-box domain.

This chain is F-box protein At3g49450, found in Arabidopsis thaliana (Mouse-ear cress).